Here is a 428-residue protein sequence, read N- to C-terminus: Arginine biosynthesis bifunctional protein ArgJ, mitochondrial (428 aa).

Residues threonine 171, lysine 197, threonine 208, glutamate 294, asparagine 423, and serine 428 each contribute to the substrate site. The active-site Nucleophile is the threonine 208.

The protein belongs to the ArgJ family. As to quaternary structure, heterodimer of an alpha and a beta chain. The alpha and beta chains are autoproteolytically processed from a single precursor protein within the mitochondrion.

The protein resides in the mitochondrion matrix. The catalysed reaction is N(2)-acetyl-L-ornithine + L-glutamate = N-acetyl-L-glutamate + L-ornithine. It carries out the reaction L-glutamate + acetyl-CoA = N-acetyl-L-glutamate + CoA + H(+). It functions in the pathway amino-acid biosynthesis; L-arginine biosynthesis; L-ornithine and N-acetyl-L-glutamate from L-glutamate and N(2)-acetyl-L-ornithine (cyclic): step 1/1. It participates in amino-acid biosynthesis; L-arginine biosynthesis; N(2)-acetyl-L-ornithine from L-glutamate: step 1/4. Catalyzes two activities which are involved in the cyclic version of arginine biosynthesis: the synthesis of acetylglutamate from glutamate and acetyl-CoA, and of ornithine by transacetylation between acetylornithine and glutamate. The protein is Arginine biosynthesis bifunctional protein ArgJ, mitochondrial of Komagataella phaffii (strain GS115 / ATCC 20864) (Yeast).